The primary structure comprises 203 residues: Superoxide dismutase [Mn] (203 aa).

Residues His-27, His-81, Asp-164, and His-168 each coordinate Mn(2+).

It belongs to the iron/manganese superoxide dismutase family. Homodimer. Mn(2+) is required as a cofactor.

It carries out the reaction 2 superoxide + 2 H(+) = H2O2 + O2. In terms of biological role, destroys superoxide anion radicals which are normally produced within the cells and which are toxic to biological systems. Partially complements double sodA-sodB deletions in E.coli. This is Superoxide dismutase [Mn] from Pseudomonas aeruginosa (strain ATCC 15692 / DSM 22644 / CIP 104116 / JCM 14847 / LMG 12228 / 1C / PRS 101 / PAO1).